The chain runs to 339 residues: Uroporphyrinogen decarboxylase (339 aa).

Substrate-binding positions include 23 to 27, aspartate 72, tyrosine 147, threonine 202, and histidine 315; that span reads RQAGR.

It belongs to the uroporphyrinogen decarboxylase family. As to quaternary structure, homodimer.

It is found in the cytoplasm. The catalysed reaction is uroporphyrinogen III + 4 H(+) = coproporphyrinogen III + 4 CO2. The protein operates within porphyrin-containing compound metabolism; protoporphyrin-IX biosynthesis; coproporphyrinogen-III from 5-aminolevulinate: step 4/4. Catalyzes the decarboxylation of four acetate groups of uroporphyrinogen-III to yield coproporphyrinogen-III. This is Uroporphyrinogen decarboxylase from Geobacter sp. (strain M21).